Here is a 277-residue protein sequence, read N- to C-terminus: MKQYLDLLRHVREHGTYKEDRTGTGTYAVFGYQMRYDLSQGFPMLTTKKLHLRSIIHELLWFLSGDTNIRYLKENGVSIWDGWATPEGELGPVYGEQWRSWKTADGGVIDQITEVLKEIKRNPDSRRLVVSAWNPAVLPDPSISPDANAAAGKQALPPCHCLFQFYVADGKLSCQLYQRSGDIFLGVPFNIASYALLTLMMAQVCDLQPGDFVHTLGDAHLYSNHLEQADTQLARTPGPLPTMTLNPAVKDLFAFTFDDFTVSNYNPDAHIKAPVAI.

R21 is a binding site for dUMP. (6R)-5,10-methylene-5,6,7,8-tetrahydrofolate is bound at residue H51. Position 126–127 (126–127 (RR)) interacts with dUMP. C159 (nucleophile) is an active-site residue. Residues 179–182 (RSGD), N190, and 220–222 (HLY) contribute to the dUMP site. D182 serves as a coordination point for (6R)-5,10-methylene-5,6,7,8-tetrahydrofolate. A276 is a (6R)-5,10-methylene-5,6,7,8-tetrahydrofolate binding site.

This sequence belongs to the thymidylate synthase family. Bacterial-type ThyA subfamily. Homodimer.

It localises to the cytoplasm. The catalysed reaction is dUMP + (6R)-5,10-methylene-5,6,7,8-tetrahydrofolate = 7,8-dihydrofolate + dTMP. It functions in the pathway pyrimidine metabolism; dTTP biosynthesis. In terms of biological role, catalyzes the reductive methylation of 2'-deoxyuridine-5'-monophosphate (dUMP) to 2'-deoxythymidine-5'-monophosphate (dTMP) while utilizing 5,10-methylenetetrahydrofolate (mTHF) as the methyl donor and reductant in the reaction, yielding dihydrofolate (DHF) as a by-product. This enzymatic reaction provides an intracellular de novo source of dTMP, an essential precursor for DNA biosynthesis. This Alcanivorax borkumensis (strain ATCC 700651 / DSM 11573 / NCIMB 13689 / SK2) protein is Thymidylate synthase.